Reading from the N-terminus, the 799-residue chain is Ribosome biogenesis protein BOP1 homolog (799 aa).

Positions 1-171 (MPRRVRAQKR…DDTSDEEHSL (171 aa)) are disordered. The segment covering 58-69 (SESDVTDDEQID) has biased composition (acidic residues). The span at 70 to 81 (EEARQADRDLLK) shows a compositional bias: basic and acidic residues. The segment covering 93–121 (DPSDADNDDDDDEEEAASDDDDEEEDAEP) has biased composition (acidic residues). Low complexity predominate over residues 122–132 (SSDSSNEASDA). 7 WD repeats span residues 457-498 (GHKA…RVVT), 500-538 (DAEV…AAID), 584-626 (PHHA…TQHP), 629-669 (KRNR…KKLL), 670-709 (TGVR…KPYK), 713-752 (YHKY…DLGQ), and 769-799 (SDGM…KLHV).

It belongs to the WD repeat BOP1/ERB1 family.

It is found in the nucleus. The protein resides in the nucleolus. It localises to the nucleoplasm. In terms of biological role, required for maturation of ribosomal RNAs and formation of the large ribosomal subunit. This chain is Ribosome biogenesis protein BOP1 homolog, found in Monosiga brevicollis (Choanoflagellate).